The following is a 426-amino-acid chain: Enolase 1 (426 aa).

Gln163 is a (2R)-2-phosphoglycerate binding site. Residue Glu205 is the Proton donor of the active site. 3 residues coordinate Mg(2+): Asp242, Glu283, and Asp310. (2R)-2-phosphoglycerate-binding residues include Lys335, Arg364, Ser365, and Lys386. The active-site Proton acceptor is the Lys335.

This sequence belongs to the enolase family. The cofactor is Mg(2+).

The protein localises to the cytoplasm. It localises to the secreted. The protein resides in the cell surface. It carries out the reaction (2R)-2-phosphoglycerate = phosphoenolpyruvate + H2O. It functions in the pathway carbohydrate degradation; glycolysis; pyruvate from D-glyceraldehyde 3-phosphate: step 4/5. Functionally, catalyzes the reversible conversion of 2-phosphoglycerate (2-PG) into phosphoenolpyruvate (PEP). It is essential for the degradation of carbohydrates via glycolysis. The polypeptide is Enolase 1 (Streptomyces coelicolor (strain ATCC BAA-471 / A3(2) / M145)).